The sequence spans 390 residues: Dynein regulatory complex subunit 5 (390 aa).

LRR repeat units follow at residues 182–205 (TETLTHLDLSNNSLDDDKVRMLAS), 210–233 (NLSITHLNLSHNKIADRGVRALAK), and 238–261 (HSVISLLELHDNQIHTEGAESLAR).

The protein belongs to the DRC5 family. Component of the nexin-dynein regulatory complex (N-DRC). Interacts with DRC1, DRC2, DRC3, DRC4, DRC7 and DRC11.

It localises to the cell projection. It is found in the cilium. The protein localises to the flagellum. Its subcellular location is the cytoplasm. The protein resides in the cytoskeleton. It localises to the flagellum axoneme. Component of the nexin-dynein regulatory complex (N-DRC) a key regulator of ciliary/flagellar motility which maintains the alignment and integrity of the distal axoneme and regulates microtubule sliding in motile axonemes. May play a role in the assembly of N-DRC. In Chlamydomonas reinhardtii (Chlamydomonas smithii), this protein is Dynein regulatory complex subunit 5.